The primary structure comprises 348 residues: Phospho-2-dehydro-3-deoxyheptonate aldolase, Trp-sensitive (348 aa).

It belongs to the class-I DAHP synthase family.

The enzyme catalyses D-erythrose 4-phosphate + phosphoenolpyruvate + H2O = 7-phospho-2-dehydro-3-deoxy-D-arabino-heptonate + phosphate. It functions in the pathway metabolic intermediate biosynthesis; chorismate biosynthesis; chorismate from D-erythrose 4-phosphate and phosphoenolpyruvate: step 1/7. Stereospecific condensation of phosphoenolpyruvate (PEP) and D-erythrose-4-phosphate (E4P) giving rise to 3-deoxy-D-arabino-heptulosonate-7-phosphate (DAHP). In Buchnera aphidicola subsp. Acyrthosiphon pisum (strain APS) (Acyrthosiphon pisum symbiotic bacterium), this protein is Phospho-2-dehydro-3-deoxyheptonate aldolase, Trp-sensitive (aroH).